Consider the following 94-residue polypeptide: Co-chaperonin GroES (94 aa).

It belongs to the GroES chaperonin family. As to quaternary structure, heptamer of 7 subunits arranged in a ring. Interacts with the chaperonin GroEL.

It localises to the cytoplasm. Its function is as follows. Together with the chaperonin GroEL, plays an essential role in assisting protein folding. The GroEL-GroES system forms a nano-cage that allows encapsulation of the non-native substrate proteins and provides a physical environment optimized to promote and accelerate protein folding. GroES binds to the apical surface of the GroEL ring, thereby capping the opening of the GroEL channel. The sequence is that of Co-chaperonin GroES from Halalkalibacterium halodurans (strain ATCC BAA-125 / DSM 18197 / FERM 7344 / JCM 9153 / C-125) (Bacillus halodurans).